The sequence spans 77 residues: Translation initiation factor IF-1, chloroplastic (77 aa).

In terms of domain architecture, S1-like spans 1–71; it reads MKEQKLIHEG…TRGRIIYRLR (71 aa).

It belongs to the IF-1 family. In terms of assembly, component of the 30S ribosomal translation pre-initiation complex which assembles on the 30S ribosome in the order IF-2 and IF-3, IF-1 and N-formylmethionyl-tRNA(fMet); mRNA recruitment can occur at any time during PIC assembly.

It localises to the plastid. It is found in the chloroplast. Functionally, one of the essential components for the initiation of protein synthesis. Stabilizes the binding of IF-2 and IF-3 on the 30S subunit to which N-formylmethionyl-tRNA(fMet) subsequently binds. Helps modulate mRNA selection, yielding the 30S pre-initiation complex (PIC). Upon addition of the 50S ribosomal subunit IF-1, IF-2 and IF-3 are released leaving the mature 70S translation initiation complex. The protein is Translation initiation factor IF-1, chloroplastic of Cabomba caroliniana (Carolina fanwort).